Consider the following 90-residue polypeptide: Hemoglobin subunit alpha-1 (90 aa).

The region spanning 1–90 is the Globin domain; it reads VLTDDDKNHV…SKLSDLHAEK (90 aa).

It belongs to the globin family. As to quaternary structure, heterotetramer of two alpha chains and two beta chains. In terms of tissue distribution, red blood cells.

Involved in oxygen transport from the lung to the various peripheral tissues. The polypeptide is Hemoglobin subunit alpha-1 (Saara hardwickii (Indian spiny-tailed lizard)).